Reading from the N-terminus, the 436-residue chain is Retinoic acid receptor RXR (436 aa).

Residues Met1–His108 form a disordered region. The modulating stretch occupies residues Met1–Ile116. Positions Ser13–Met22 are enriched in low complexity. Polar residues-rich tracts occupy residues Ser40 to His49 and Met62 to His76. The span at Ser85–Ser98 shows a compositional bias: low complexity. 2 consecutive NR C4-type zinc fingers follow at residues Cys117–Cys137 and Cys153–Cys172. Residues Cys117–Met182 constitute a DNA-binding region (nuclear receptor). A hinge region spans residues Lys183–Ser206. Positions Glu189–Gly200 are enriched in basic and acidic residues. A disordered region spans residues Glu189–Asn209. Residues Asn209 to Pro432 enclose the NR LBD domain. 9-cis-retinoate is bound by residues Arg290 and Ala301.

The protein belongs to the nuclear hormone receptor family. NR2 subfamily. In terms of assembly, homodimer (via ligand-binding domain). Heterodimer. Homotetramer consisting of 2 canonical homodimers. Within the tetramer, each monomer binds one molecule of 9C-RA and a NCOA1-derived peptide containing an L-X(2)-L-L motif.

The protein resides in the nucleus. Functionally, ligand-dependent transcription factor probably involved in the retinoic acid response pathway. Binds 9-cis-retinoic acid (9C-RA) and, to a lesser extent, docosahexaenoic acid (DHA), phytanic acid, methoprene acid and oleic acid. Binds to double-stranded DNA sequences containing direct repeats (DR) with the consensus sequence 5'-[AG]GGTCA-3' and 1, 2, 3, 4 or 5 nucleotides in between (DR1, DR2, DR3. DR4 and DR5, respectively). Binding to DR1 is strongest. Transactivates gene expression when 9C-RA or DHA is bound. The polypeptide is Retinoic acid receptor RXR (Biomphalaria glabrata (Bloodfluke planorb)).